A 133-amino-acid chain; its full sequence is Profilin Sal k 4.0101 (133 aa).

Cysteine 95 and cysteine 117 are disulfide-bonded.

This sequence belongs to the profilin family. In terms of assembly, occurs in many kinds of cells as a complex with monomeric actin in a 1:1 ratio. In terms of tissue distribution, expressed in pollen.

It localises to the cytoplasm. The protein localises to the cytoskeleton. In terms of biological role, binds to actin and affects the structure of the cytoskeleton. At high concentrations, profilin prevents the polymerization of actin, whereas it enhances it at low concentrations. This chain is Profilin Sal k 4.0101, found in Kali turgidum (Prickly saltwort).